Consider the following 432-residue polypeptide: 3-phosphoshikimate 1-carboxyvinyltransferase (432 aa).

Lys-22, Ser-23, and Arg-27 together coordinate 3-phosphoshikimate. Lys-22 serves as a coordination point for phosphoenolpyruvate. Residues Gly-96 and Arg-127 each coordinate phosphoenolpyruvate. 3-phosphoshikimate is bound by residues Ser-173, Ser-174, Gln-175, Ser-201, Asp-316, Asn-339, and Lys-343. Residue Gln-175 participates in phosphoenolpyruvate binding. The Proton acceptor role is filled by Asp-316. Positions 347, 391, and 416 each coordinate phosphoenolpyruvate.

Belongs to the EPSP synthase family. As to quaternary structure, monomer.

It is found in the cytoplasm. The enzyme catalyses 3-phosphoshikimate + phosphoenolpyruvate = 5-O-(1-carboxyvinyl)-3-phosphoshikimate + phosphate. It participates in metabolic intermediate biosynthesis; chorismate biosynthesis; chorismate from D-erythrose 4-phosphate and phosphoenolpyruvate: step 6/7. Functionally, catalyzes the transfer of the enolpyruvyl moiety of phosphoenolpyruvate (PEP) to the 5-hydroxyl of shikimate-3-phosphate (S3P) to produce enolpyruvyl shikimate-3-phosphate and inorganic phosphate. This is 3-phosphoshikimate 1-carboxyvinyltransferase from Actinobacillus pleuropneumoniae serotype 5b (strain L20).